Reading from the N-terminus, the 375-residue chain is GDP-mannose transporter GONST2 (375 aa).

The next 9 helical transmembrane spans lie at 79–99 (LVSG…NKIV), 112–132 (MLYQ…SGVV), 141–161 (LIRV…SGMY), 165–185 (YINV…TGIG), 199–219 (WAAM…DLTF), 262–282 (MVLL…ILLG), 300–320 (VVAT…MWFL), 327–347 (TYSL…LVLF), and 349–369 (VPLS…GVVF).

The protein belongs to the nucleotide-sugar transporter family. GDP-Mannose:GMP antiporter (GMA) (TC 2.A.7.13) subfamily. As to expression, expressed in rosette leaves, stems, flowers and siliques.

It is found in the golgi apparatus membrane. GDP-mannose transporter that may be involved in the import of GDP-mannose from the cytoplasm into the Golgi lumen. This Arabidopsis thaliana (Mouse-ear cress) protein is GDP-mannose transporter GONST2.